A 272-amino-acid chain; its full sequence is Diaminopimelate epimerase (272 aa).

Substrate is bound by residues Asn11 and Asn63. Cys72 (proton donor) is an active-site residue. Substrate is bound by residues 73 to 74 (GN), Asn190, and 208 to 209 (ER). Cys217 functions as the Proton acceptor in the catalytic mechanism. 218–219 (GT) is a binding site for substrate.

It belongs to the diaminopimelate epimerase family. As to quaternary structure, homodimer.

It localises to the cytoplasm. The enzyme catalyses (2S,6S)-2,6-diaminopimelate = meso-2,6-diaminopimelate. It participates in amino-acid biosynthesis; L-lysine biosynthesis via DAP pathway; DL-2,6-diaminopimelate from LL-2,6-diaminopimelate: step 1/1. In terms of biological role, catalyzes the stereoinversion of LL-2,6-diaminopimelate (L,L-DAP) to meso-diaminopimelate (meso-DAP), a precursor of L-lysine and an essential component of the bacterial peptidoglycan. This is Diaminopimelate epimerase from Clostridium perfringens (strain 13 / Type A).